A 409-amino-acid polypeptide reads, in one-letter code: Tryptophan synthase beta chain (409 aa).

Lysine 95 is modified (N6-(pyridoxal phosphate)lysine).

The protein belongs to the TrpB family. Tetramer of two alpha and two beta chains. Pyridoxal 5'-phosphate is required as a cofactor.

The catalysed reaction is (1S,2R)-1-C-(indol-3-yl)glycerol 3-phosphate + L-serine = D-glyceraldehyde 3-phosphate + L-tryptophan + H2O. It functions in the pathway amino-acid biosynthesis; L-tryptophan biosynthesis; L-tryptophan from chorismate: step 5/5. Its function is as follows. The beta subunit is responsible for the synthesis of L-tryptophan from indole and L-serine. The sequence is that of Tryptophan synthase beta chain from Pseudomonas syringae pv. syringae (strain B728a).